The chain runs to 348 residues: Dihydroorotase (348 aa).

Zn(2+)-binding residues include histidine 17 and histidine 19. Substrate contacts are provided by residues 19 to 21 (HLR) and asparagine 45. Residues lysine 103, histidine 140, and histidine 178 each coordinate Zn(2+). An N6-carboxylysine modification is found at lysine 103. Histidine 140 is a substrate binding site. Leucine 223 is a substrate binding site. Aspartate 251 contributes to the Zn(2+) binding site. Aspartate 251 is an active-site residue. Histidine 255 and alanine 267 together coordinate substrate.

It belongs to the metallo-dependent hydrolases superfamily. DHOase family. Class II DHOase subfamily. In terms of assembly, homodimer. Requires Zn(2+) as cofactor.

The catalysed reaction is (S)-dihydroorotate + H2O = N-carbamoyl-L-aspartate + H(+). It functions in the pathway pyrimidine metabolism; UMP biosynthesis via de novo pathway; (S)-dihydroorotate from bicarbonate: step 3/3. In terms of biological role, catalyzes the reversible cyclization of carbamoyl aspartate to dihydroorotate. This is Dihydroorotase from Salmonella typhimurium (strain LT2 / SGSC1412 / ATCC 700720).